The following is a 376-amino-acid chain: Queuine tRNA-ribosyltransferase (376 aa).

Catalysis depends on Asp93, which acts as the Proton acceptor. Residues 93 to 97 (DSGGF), Asp147, Gln190, and Gly217 contribute to the substrate site. Positions 248–254 (GVGTPDD) are RNA binding. The Nucleophile role is filled by Asp267. An RNA binding; important for wobble base 34 recognition region spans residues 272–276 (TRAGR).

Belongs to the queuine tRNA-ribosyltransferase family. Homodimer. Within each dimer, one monomer is responsible for RNA recognition and catalysis, while the other monomer binds to the replacement base PreQ1.

The catalysed reaction is 7-aminomethyl-7-carbaguanine + guanosine(34) in tRNA = 7-aminomethyl-7-carbaguanosine(34) in tRNA + guanine. It functions in the pathway tRNA modification; tRNA-queuosine biosynthesis. Functionally, catalyzes the base-exchange of a guanine (G) residue with the queuine precursor 7-aminomethyl-7-deazaguanine (PreQ1) at position 34 (anticodon wobble position) in tRNAs with GU(N) anticodons (tRNA-Asp, -Asn, -His and -Tyr). Catalysis occurs through a double-displacement mechanism. The nucleophile active site attacks the C1' of nucleotide 34 to detach the guanine base from the RNA, forming a covalent enzyme-RNA intermediate. The proton acceptor active site deprotonates the incoming PreQ1, allowing a nucleophilic attack on the C1' of the ribose to form the product. After dissociation, two additional enzymatic reactions on the tRNA convert PreQ1 to queuine (Q), resulting in the hypermodified nucleoside queuosine (7-(((4,5-cis-dihydroxy-2-cyclopenten-1-yl)amino)methyl)-7-deazaguanosine). This is Queuine tRNA-ribosyltransferase from Mesorhizobium japonicum (strain LMG 29417 / CECT 9101 / MAFF 303099) (Mesorhizobium loti (strain MAFF 303099)).